The primary structure comprises 323 residues: Acetylglutamate kinase (323 aa).

Residues 90-91 (GG), R112, and N218 each bind substrate.

This sequence belongs to the acetylglutamate kinase family. ArgB subfamily.

Its subcellular location is the cytoplasm. It catalyses the reaction N-acetyl-L-glutamate + ATP = N-acetyl-L-glutamyl 5-phosphate + ADP. It participates in amino-acid biosynthesis; L-arginine biosynthesis; N(2)-acetyl-L-ornithine from L-glutamate: step 2/4. Its function is as follows. Catalyzes the ATP-dependent phosphorylation of N-acetyl-L-glutamate. The polypeptide is Acetylglutamate kinase (Ehrlichia canis (strain Jake)).